The following is a 308-amino-acid chain: MTQSLPSIFIDNGNCEIQPYVSLADMTTFRVGGAAEWFIAPHNLKELQASYAWANEQALPITFLGAGSNLLISDQGLPGLVISTRYLRQRTFDPETCQVTAYAGESLPKLAWQAAKRGWSGLEWAVGIPGTVGGALVMNAGAHGGCTADVLTEVHALDKDGTVQVLKPEHMAFQYRSSILQQSPKPVLLGVFQLHANQSAEQVKATTQSHLDHRLSTQPYDWPSCGSVFRNPLPRTAGWLIEQSGLKGYSLGGAQVAQKHANFILNSGNATATDIFNLIHYVQQKVEENWSLLLKPEVKMLGKFPQIT.

An FAD-binding PCMH-type domain is found at 30–213 (RVGGAAEWFI…KATTQSHLDH (184 aa)). Residue R176 is part of the active site. S227 acts as the Proton donor in catalysis. Residue E297 is part of the active site.

Belongs to the MurB family. Requires FAD as cofactor.

The protein resides in the cytoplasm. The enzyme catalyses UDP-N-acetyl-alpha-D-muramate + NADP(+) = UDP-N-acetyl-3-O-(1-carboxyvinyl)-alpha-D-glucosamine + NADPH + H(+). Its pathway is cell wall biogenesis; peptidoglycan biosynthesis. Its function is as follows. Cell wall formation. This Acaryochloris marina (strain MBIC 11017) protein is UDP-N-acetylenolpyruvoylglucosamine reductase.